The primary structure comprises 387 residues: 1-deoxy-D-xylulose 5-phosphate reductoisomerase (387 aa).

5 residues coordinate NADPH: Thr10, Gly11, Ile13, Asn38, and Asn122. Residue Lys123 participates in 1-deoxy-D-xylulose 5-phosphate binding. An NADPH-binding site is contributed by Glu124. Residue Asp148 coordinates Mn(2+). 1-deoxy-D-xylulose 5-phosphate contacts are provided by Ser149, Glu150, Ser174, and His197. Glu150 is a Mn(2+) binding site. Gly203 is a binding site for NADPH. 1-deoxy-D-xylulose 5-phosphate contacts are provided by Ser210, Asn215, Lys216, and Glu219. A Mn(2+)-binding site is contributed by Glu219.

The protein belongs to the DXR family. It depends on Mg(2+) as a cofactor. The cofactor is Mn(2+).

It catalyses the reaction 2-C-methyl-D-erythritol 4-phosphate + NADP(+) = 1-deoxy-D-xylulose 5-phosphate + NADPH + H(+). It functions in the pathway isoprenoid biosynthesis; isopentenyl diphosphate biosynthesis via DXP pathway; isopentenyl diphosphate from 1-deoxy-D-xylulose 5-phosphate: step 1/6. Catalyzes the NADPH-dependent rearrangement and reduction of 1-deoxy-D-xylulose-5-phosphate (DXP) to 2-C-methyl-D-erythritol 4-phosphate (MEP). The sequence is that of 1-deoxy-D-xylulose 5-phosphate reductoisomerase from Ehrlichia canis (strain Jake).